We begin with the raw amino-acid sequence, 144 residues long: MEETHDDRCMSRGDLYAYMRELINDKKWNFNLKNVWAHVHDSEFDTIRGYIRDHLDDAIIIHKDLRYKRLCHHRARIENLLKLNQSLKKEYENSISRYNGAAQESATRRNVPVRDKQRRAVAAAADRIDRKATRHCKSNRERTV.

This sequence belongs to the baculoviridae LEF-11 family.

Involved in late/very late gene activation. This chain is Late expression factor 11 (LEF-11), found in Spodoptera litura multicapsid nucleopolyhedrovirus (SpltMNPV).